The sequence spans 611 residues: CRS2-associated factor 2, chloroplastic (611 aa).

The transit peptide at 1 to 58 directs the protein to the chloroplast; sequence MPPPPPQRPASSHVGRANLFSASPPPLSNRRYPHHRSLPLPPVSPRRRDPKKHSQQPS. A disordered region spans residues 1 to 72; that stretch reads MPPPPPQRPA…TDSGPTRTVT (72 aa). The segment covering 55–72 has biased composition (polar residues); sequence QQPSQEEPTDSGPTRTVT. 2 CRM domains span residues 232-328 and 350-446; these read EPLT…TRPR and DGFT…YSKP. Residues 486–509 form a CRS2 binding region; it reads KMFKLWKSAVDSSLALLLDDAEAN. Residues 554–578 form a disordered region; it reads MNDEPETSVAGNEEGQLEQSPDLRD.

Interacts with CRS2 and RNA. Part of large ribonucleo-protein complexes that include group IIB introns, CRS2 and CAF2.

It is found in the plastid. The protein localises to the chloroplast stroma. Required for the splicing of group IIB introns in chloroplasts. Forms splicing particles with CRS2. Interacts with RNA and confers intron specificity of the splicing particles. This is CRS2-associated factor 2, chloroplastic (CAF2) from Zea mays (Maize).